The primary structure comprises 258 residues: MLAIISPAKTLDYQSAVPKFEISQPQLTQYSQQLIDICKQLSPAQIASLMSISDKLAGLNAARFADWQADHNEQNARPAIYAFKGDVYTGLDVESLTSDDVLFAQQHLRMLSGLYGLLKPLDLMQPYRLEMGTKLANKKGKDLYAFWGNVITQTLQQALDEQGDNILVNLASDEYYKAVQASQLKARIIKPVFLDNKGGKYKVISFYAKKARGLMCRYIIQNRLTEAEQLKEFNLAGYWFDEAASTKDEFVFKRDLGE.

The protein belongs to the UPF0246 family.

This is UPF0246 protein MS0374 from Mannheimia succiniciproducens (strain KCTC 0769BP / MBEL55E).